Consider the following 204-residue polypeptide: Urease accessory protein UreG (204 aa).

12 to 19 (GPVGSGKT) lines the GTP pocket.

The protein belongs to the SIMIBI class G3E GTPase family. UreG subfamily. In terms of assembly, homodimer. UreD, UreF and UreG form a complex that acts as a GTP-hydrolysis-dependent molecular chaperone, activating the urease apoprotein by helping to assemble the nickel containing metallocenter of UreC. The UreE protein probably delivers the nickel.

The protein localises to the cytoplasm. In terms of biological role, facilitates the functional incorporation of the urease nickel metallocenter. This process requires GTP hydrolysis, probably effectuated by UreG. This chain is Urease accessory protein UreG, found in Stutzerimonas stutzeri (strain A1501) (Pseudomonas stutzeri).